The sequence spans 480 residues: Aspartyl/glutamyl-tRNA(Asn/Gln) amidotransferase subunit B (480 aa).

This sequence belongs to the GatB/GatE family. GatB subfamily. As to quaternary structure, heterotrimer of A, B and C subunits.

The catalysed reaction is L-glutamyl-tRNA(Gln) + L-glutamine + ATP + H2O = L-glutaminyl-tRNA(Gln) + L-glutamate + ADP + phosphate + H(+). It catalyses the reaction L-aspartyl-tRNA(Asn) + L-glutamine + ATP + H2O = L-asparaginyl-tRNA(Asn) + L-glutamate + ADP + phosphate + 2 H(+). Its function is as follows. Allows the formation of correctly charged Asn-tRNA(Asn) or Gln-tRNA(Gln) through the transamidation of misacylated Asp-tRNA(Asn) or Glu-tRNA(Gln) in organisms which lack either or both of asparaginyl-tRNA or glutaminyl-tRNA synthetases. The reaction takes place in the presence of glutamine and ATP through an activated phospho-Asp-tRNA(Asn) or phospho-Glu-tRNA(Gln). This Saccharophagus degradans (strain 2-40 / ATCC 43961 / DSM 17024) protein is Aspartyl/glutamyl-tRNA(Asn/Gln) amidotransferase subunit B.